The sequence spans 155 residues: MNSVFRSTARCLRSATWQYKTAHKNGELSVGRARLMCSSAGQKNLEEMVKKDKVVVFMKGTPAQPMCGFSNAVVQILRMHGVDNYASYNVLDDQDVRQGIKTFSNWPTIPQVFFNGEFVGGCDILLQMHQSGDLVEELQKLGIRSALLDQEKESK.

A mitochondrion-targeting transit peptide spans 1 to 14 (MNSVFRSTARCLRS). The Glutaredoxin domain maps to 42–145 (QKNLEEMVKK…EELQKLGIRS (104 aa)). Lys-59 is a binding site for glutathione. Cys-67 contributes to the [2Fe-2S] cluster binding site. Glutathione contacts are provided by residues 97–101 (RQGIK), Ile-109, and 122–123 (CD).

In terms of assembly, homodimer.

Its subcellular location is the mitochondrion. Functionally, monothiol glutaredoxin involved in mitochondrial iron-sulfur (Fe/S) cluster transfer. Receives iron-sulfur clusters from scaffold protein ISCU and mediates their transfer to apoproteins, to the 4Fe/FS cluster biosynthesis machinery, or export from mitochondrion. Required for normal hemoglobin biosynthesis. The chain is Glutaredoxin-related protein 5, mitochondrial (glrx5) from Danio rerio (Zebrafish).